We begin with the raw amino-acid sequence, 443 residues long: MALRLGRLGSDPWWRAVLGDYAQLRAASPRCASARVCQLPGTAGPQPRRGLGYGPWARGGSGLGTRLAATLAGLAGLAAAAFGHVQRAEMVPKSSGARSPSPGRREEDGDELARRCSTFMSSPVTELRELRRRPEDMKTKMELMIMETQAQVCRALAQVDGVADFTVDRWERKEGGGGITCVLQDGRVFEKAGVSISVVHGNLSEEAANQMRGRGKTLKTKDSKLPFTAMGVSSVIHPKNPYAPTMHFNYRYFEVEEADGNTHWWFGGGCDLTPTYLNQEDAVHFHRTLKEACDQHGPDIYPKFKKWCDDYFFIVHRGERRGIGGIFFDDLDSPSKEEAFRFVKTCAEAVVPSYVPIVKKHCDDSYTPRDKLWQQLRRGRYVEFNLLYDRGTKFGLFTPGSRIESILMSLPLTARWEYMHSPPENSKEAEILEVLRHPKDWVH.

The N-terminal 98 residues, 1 to 98 (MALRLGRLGS…EMVPKSSGAR (98 aa)), are a transit peptide targeting the mitochondrion. Residues 89–112 (EMVPKSSGARSPSPGRREEDGDEL) form a disordered region. Serine 101 is modified (phosphoserine). Basic and acidic residues predominate over residues 103 to 112 (GRREEDGDEL). The tract at residues 182–191 (VLQDGRVFEK) is important for dimerization. Coproporphyrinogen III is bound at residue serine 233. The active-site Proton donor is the histidine 247. Coproporphyrinogen III is bound at residue 249–251 (NYR). The segment at 381–417 (YVEFNLLYDRGTKFGLFTPGSRIESILMSLPLTARWE) is important for dimerization. Lysine 393 carries the post-translational modification N6-acetyllysine; alternate. Lysine 393 is modified (N6-succinyllysine; alternate). Coproporphyrinogen III is bound at residue 400-402 (GSR).

This sequence belongs to the aerobic coproporphyrinogen-III oxidase family. Homodimer. As to expression, expressed in erythroid cells. Expressed in liver.

The protein resides in the mitochondrion intermembrane space. It catalyses the reaction coproporphyrinogen III + O2 + 2 H(+) = protoporphyrinogen IX + 2 CO2 + 2 H2O. It participates in porphyrin-containing compound metabolism; protoporphyrin-IX biosynthesis; protoporphyrinogen-IX from coproporphyrinogen-III (O2 route): step 1/1. In terms of biological role, involved in the heme biosynthesis. Catalyzes the aerobic oxidative decarboxylation of propionate groups of rings A and B of coproporphyrinogen-III to yield the vinyl groups in protoporphyrinogen-IX. This chain is Oxygen-dependent coproporphyrinogen-III oxidase, mitochondrial (Cpox), found in Mus musculus (Mouse).